Consider the following 1529-residue polypeptide: ABC multidrug transporter AFR2 (1529 aa).

The span at 1–10 (MAFAGVGQGL) shows a compositional bias: gly residues. The tract at residues 1-21 (MAFAGVGQGLGTYDRTEQTSG) is disordered. One can recognise an ABC transporter 1 domain in the interval 144-394 (GALRDLISNR…FVDMGFHCPS (251 aa)). N-linked (GlcNAc...) asparagine glycosylation is found at N235 and N318. Transmembrane regions (helical) follow at residues 505-525 (LTLT…SVFY), 539-559 (ALLF…ILIL), 589-609 (IPYK…MTNL), 614-634 (GPYF…SMLF), and 648-668 (LAPA…AVNV). An N-linked (GlcNAc...) asparagine glycan is attached at N742. The helical transmembrane segment at 757–777 (GILIGFFLFFTAIYMTATEFI) threads the bilayer. One can recognise an ABC transporter 2 domain in the interval 845 to 1087 (FSWKDVVYDI…ILIDYFEKNG (243 aa)). Position 881 to 888 (881 to 888 (GVSGAGKT)) interacts with ATP. Transmembrane regions (helical) follow at residues 1193–1213 (YIWS…FSFF), 1227–1247 (FSVF…MPNF), 1268–1288 (IFIL…GAVI), 1314–1334 (LMFL…IMIV), and 1353–1373 (MCLI…FWMF). The N-linked (GlcNAc...) asparagine glycan is linked to N1434. Residues 1465–1485 (FGLLWAYVVFNIIAAVGIYWL) traverse the membrane as a helical segment. A disordered region spans residues 1493-1529 (GKEQASEPEGVQEKLVPAQSSEKKRESVSRGSESTAA).

It belongs to the ABC transporter superfamily. ABCG family. PDR (TC 3.A.1.205) subfamily.

It is found in the cell membrane. It catalyses the reaction itraconazole(in) + ATP + H2O = itraconazole(out) + ADP + phosphate + H(+). It carries out the reaction voriconazole(in) + ATP + H2O = voriconazole(out) + ADP + phosphate + H(+). The enzyme catalyses fluconazole(in) + ATP + H2O = fluconazole(out) + ADP + phosphate + H(+). Pleiotropic ABC efflux transporter that confers resistance to structurally and functionally unrelated compounds including azoles such as fluconazole (FLC), itraconazole (ITC), posaconazole (POS), and voriconazole (VRC). The sequence is that of ABC multidrug transporter AFR2 from Cryptococcus neoformans var. grubii serotype A (strain H99 / ATCC 208821 / CBS 10515 / FGSC 9487) (Filobasidiella neoformans var. grubii).